The sequence spans 96 residues: Aspartyl/glutamyl-tRNA(Asn/Gln) amidotransferase subunit C (96 aa).

It belongs to the GatC family. Heterotrimer of A, B and C subunits.

The catalysed reaction is L-glutamyl-tRNA(Gln) + L-glutamine + ATP + H2O = L-glutaminyl-tRNA(Gln) + L-glutamate + ADP + phosphate + H(+). It catalyses the reaction L-aspartyl-tRNA(Asn) + L-glutamine + ATP + H2O = L-asparaginyl-tRNA(Asn) + L-glutamate + ADP + phosphate + 2 H(+). In terms of biological role, allows the formation of correctly charged Asn-tRNA(Asn) or Gln-tRNA(Gln) through the transamidation of misacylated Asp-tRNA(Asn) or Glu-tRNA(Gln) in organisms which lack either or both of asparaginyl-tRNA or glutaminyl-tRNA synthetases. The reaction takes place in the presence of glutamine and ATP through an activated phospho-Asp-tRNA(Asn) or phospho-Glu-tRNA(Gln). This chain is Aspartyl/glutamyl-tRNA(Asn/Gln) amidotransferase subunit C, found in Deinococcus deserti (strain DSM 17065 / CIP 109153 / LMG 22923 / VCD115).